A 212-amino-acid polypeptide reads, in one-letter code: Nitrile hydratase subunit beta (212 aa).

It belongs to the nitrile hydratase subunit beta family. As to quaternary structure, heterodimer of an alpha and a beta chain.

The catalysed reaction is an aliphatic primary amide = an aliphatic nitrile + H2O. NHase catalyzes the hydration of various nitrile compounds to the corresponding amides. In Rhodococcus erythropolis (Arthrobacter picolinophilus), this protein is Nitrile hydratase subunit beta (nthB).